A 342-amino-acid polypeptide reads, in one-letter code: RNA 3'-terminal phosphate cyclase (342 aa).

Residues Gln102 and 283 to 287 (HLADQ) contribute to the ATP site. Catalysis depends on His308, which acts as the Tele-AMP-histidine intermediate.

The protein belongs to the RNA 3'-terminal cyclase family. Type 1 subfamily.

It localises to the cytoplasm. The catalysed reaction is a 3'-end 3'-phospho-ribonucleotide-RNA + ATP = a 3'-end 2',3'-cyclophospho-ribonucleotide-RNA + AMP + diphosphate. Functionally, catalyzes the conversion of 3'-phosphate to a 2',3'-cyclic phosphodiester at the end of RNA. The mechanism of action of the enzyme occurs in 3 steps: (A) adenylation of the enzyme by ATP; (B) transfer of adenylate to an RNA-N3'P to produce RNA-N3'PP5'A; (C) and attack of the adjacent 2'-hydroxyl on the 3'-phosphorus in the diester linkage to produce the cyclic end product. The biological role of this enzyme is unknown but it is likely to function in some aspects of cellular RNA processing. The chain is RNA 3'-terminal phosphate cyclase from Pseudomonas fluorescens (strain ATCC BAA-477 / NRRL B-23932 / Pf-5).